The sequence spans 164 residues: Ribonuclease H (164 aa).

The region spanning 9-150 (DMPRVTIYTD…ADTLANAATD (142 aa)) is the RNase H type-1 domain. Residues aspartate 18, glutamate 56, aspartate 78, and aspartate 142 each coordinate Mg(2+).

This sequence belongs to the RNase H family. Monomer. The cofactor is Mg(2+).

It is found in the cytoplasm. The enzyme catalyses Endonucleolytic cleavage to 5'-phosphomonoester.. Endonuclease that specifically degrades the RNA of RNA-DNA hybrids. The protein is Ribonuclease H of Chromohalobacter salexigens (strain ATCC BAA-138 / DSM 3043 / CIP 106854 / NCIMB 13768 / 1H11).